The sequence spans 257 residues: NAD kinase (257 aa).

Asp46 functions as the Proton acceptor in the catalytic mechanism. NAD(+)-binding positions include 46 to 47 (DG), 116 to 117 (NE), Asp146, Ala154, 157 to 162 (TAYNLS), and Asn218.

Belongs to the NAD kinase family. Requires a divalent metal cation as cofactor.

It localises to the cytoplasm. The catalysed reaction is NAD(+) + ATP = ADP + NADP(+) + H(+). Functionally, involved in the regulation of the intracellular balance of NAD and NADP, and is a key enzyme in the biosynthesis of NADP. Catalyzes specifically the phosphorylation on 2'-hydroxyl of the adenosine moiety of NAD to yield NADP. In Brucella suis biovar 1 (strain 1330), this protein is NAD kinase.